The chain runs to 383 residues: uncharacterized protein (383 aa).

To V.anguillarum virulence protein VirA.

Functionally, could have an enzymatic function. This is an uncharacterized protein from Sinorhizobium fredii (strain NBRC 101917 / NGR234).